A 43-amino-acid chain; its full sequence is Protein PsbN (43 aa).

A helical membrane pass occupies residues 5–25; it reads TVLSIFISSLLLGITIYSIYI.

Belongs to the PsbN family.

Its subcellular location is the plastid. It is found in the chloroplast thylakoid membrane. In terms of biological role, may play a role in photosystem I and II biogenesis. In Gracilaria tenuistipitata var. liui (Red alga), this protein is Protein PsbN.